A 354-amino-acid polypeptide reads, in one-letter code: Kelch domain-containing protein 8B (354 aa).

8 Kelch repeats span residues 1–31 (MATG…FQDG), 32–79 (HLLV…VLGK), 81–127 (VLVV…ERDG), 128–175 (MVYA…LHGN), 176–222 (KIYV…MAEG), 224–281 (VFSL…SLGD), 282–329 (HVVA…QAGP), and 331–354 (LFAI…RDGV).

The protein localises to the cytoplasm. The protein resides in the midbody. Functionally, involved in pinching off the separated nuclei at the cleavage furrow and in cytokinesis. Required for mitotic integrity and maintenance of chromosomal stability. Protects cells against mitotic errors, centrosomal amplification, micronucleus formation and aneuploidy. Plays a key role of midbody function involving abscission of the daughter cells during cytokinesis and appropriate chromosomal and nuclear segregation into the daughter cells. In Bos taurus (Bovine), this protein is Kelch domain-containing protein 8B (KLHDC8B).